Consider the following 179-residue polypeptide: Outer-membrane lipoprotein carrier protein (179 aa).

The first 22 residues, 1-22 (MEVLRRYVLVFTSLCMTLFAWG), serve as a signal peptide directing secretion.

The protein belongs to the LolA family. As to quaternary structure, monomer.

It localises to the periplasm. Functionally, participates in the translocation of lipoproteins from the inner membrane to the outer membrane. Only forms a complex with a lipoprotein if the residue after the N-terminal Cys is not an aspartate (The Asp acts as a targeting signal to indicate that the lipoprotein should stay in the inner membrane). The chain is Outer-membrane lipoprotein carrier protein from Helicobacter hepaticus (strain ATCC 51449 / 3B1).